Reading from the N-terminus, the 227-residue chain is Myogenin (227 aa).

Residues 82-133 (DRRRAATLREKRRLKKVNEAFEALKRSTLLNPNQRLPKVEILRSAIQYIERL) enclose the bHLH domain. Positions 147 to 196 (QRELRYRPAAPQPAAPSECGSGSSSCSPEWSTQLEFGTNPADHLLSDDQA) are disordered. Positions 161–175 (APSECGSGSSSCSPE) are enriched in low complexity.

As to quaternary structure, homodimer and heterodimer. Efficient DNA binding requires dimerization with another bHLH protein.

It localises to the nucleus. Acts as a transcriptional activator that promotes transcription of muscle-specific target genes and plays a role in muscle differentiation. Induces fibroblasts to differentiate into myoblasts. Probable sequence specific DNA-binding protein. This is Myogenin (MYOG) from Gallus gallus (Chicken).